A 179-amino-acid chain; its full sequence is Peptidyl-prolyl cis-trans isomerase A (179 aa).

The PPIase cyclophilin-type domain maps to 15–178 (FFDITIGGVE…KPVVIANCGQ (164 aa)).

This sequence belongs to the cyclophilin-type PPIase family.

The protein localises to the cytoplasm. Its subcellular location is the cytosol. The catalysed reaction is [protein]-peptidylproline (omega=180) = [protein]-peptidylproline (omega=0). Binds cyclosporin A (CsA). CsA mediates some of its effects via an inhibitory action on PPIase. Its function is as follows. PPIase that catalyzes the cis-trans isomerization of proline imidic peptide bonds in oligopeptides and may therefore assist protein folding. In Dictyostelium discoideum (Social amoeba), this protein is Peptidyl-prolyl cis-trans isomerase A (ppiA).